A 338-amino-acid polypeptide reads, in one-letter code: Lipoate-protein ligase A (338 aa).

The BPL/LPL catalytic domain maps to 29–216; it reads SPDQRVLFLW…AFFNYYDEKV (188 aa). Residues Arg71, 76–79, and Lys134 contribute to the ATP site; that span reads GAVF. Lys134 is a binding site for (R)-lipoate.

Belongs to the LplA family. As to quaternary structure, monomer.

Its subcellular location is the cytoplasm. The catalysed reaction is L-lysyl-[lipoyl-carrier protein] + (R)-lipoate + ATP = N(6)-[(R)-lipoyl]-L-lysyl-[lipoyl-carrier protein] + AMP + diphosphate + H(+). It participates in protein modification; protein lipoylation via exogenous pathway; protein N(6)-(lipoyl)lysine from lipoate: step 1/2. The protein operates within protein modification; protein lipoylation via exogenous pathway; protein N(6)-(lipoyl)lysine from lipoate: step 2/2. Its function is as follows. Catalyzes both the ATP-dependent activation of exogenously supplied lipoate to lipoyl-AMP and the transfer of the activated lipoyl onto the lipoyl domains of lipoate-dependent enzymes. This chain is Lipoate-protein ligase A, found in Yersinia enterocolitica serotype O:8 / biotype 1B (strain NCTC 13174 / 8081).